A 421-amino-acid polypeptide reads, in one-letter code: Exopolysaccharide production protein ExoF (421 aa).

The first 31 residues, 1 to 31 (MQSNRRSGKSAGSRMVSCFTRLALLAALAAS), serve as a signal peptide directing secretion.

It is found in the periplasm. The protein operates within glycan metabolism; exopolysaccharide biosynthesis. Its function is as follows. Involved in succinoglycan (EPS I) synthesis. Needed for the addition of the first sugar (galactose) to the isoprenoid carrier. The chain is Exopolysaccharide production protein ExoF (exoF) from Rhizobium meliloti (strain 1021) (Ensifer meliloti).